The sequence spans 114 residues: Transcription initiation factor IIB (114 aa).

A run of 2 repeats spans residues 1-17 and 28-109.

Belongs to the TFIIB family.

In terms of biological role, stabilizes TBP binding to an archaeal box-A promoter. Also responsible for recruiting RNA polymerase II to the pre-initiation complex (DNA-TBP-TFIIB). This is Transcription initiation factor IIB (tfb) from Haloarcula vallismortis (Halobacterium vallismortis).